Here is a 108-residue protein sequence, read N- to C-terminus: MVIRGVGIDIVSMSRFEKVYAKHGQRFIAEFFAEEEQSMPLASLAARFAAKEAVKKALNTPSILFKNIVIGSPAREAKIVGQEIQGRVWVSISHEKDNAVAIAIWEAD.

Positions 9 and 52 each coordinate Mg(2+).

The protein belongs to the P-Pant transferase superfamily. AcpS family. Mg(2+) is required as a cofactor.

Its subcellular location is the cytoplasm. It catalyses the reaction apo-[ACP] + CoA = holo-[ACP] + adenosine 3',5'-bisphosphate + H(+). Its function is as follows. Transfers the 4'-phosphopantetheine moiety from coenzyme A to a Ser of acyl-carrier-protein. This Coprothermobacter proteolyticus (strain ATCC 35245 / DSM 5265 / OCM 4 / BT) protein is Holo-[acyl-carrier-protein] synthase.